We begin with the raw amino-acid sequence, 354 residues long: Ferredoxin--NADP reductase, chloroplastic (354 aa).

The transit peptide at M1 to A35 directs the protein to the chloroplast. The 130-residue stretch at K69–L198 folds into the FAD-binding FR-type domain. An N6,N6,N6-trimethyllysine mark is found at K118 and K124. Residues R130 to S133, C151 to R153, and Y157 contribute to the FAD site. Residues S133 and R153 each contribute to the NADP(+) site. Residue K170 is modified to N6,N6-dimethyllysine. Residues L172 to S174 and T213 each bind FAD. Residues T213, V245–G246, S275–R276, K285, G313–L314, and E352 contribute to the NADP(+) site.

This sequence belongs to the ferredoxin--NADP reductase type 1 family. It depends on FAD as a cofactor.

The protein resides in the plastid. It localises to the chloroplast stroma. Its subcellular location is the chloroplast thylakoid membrane. The enzyme catalyses 2 reduced [2Fe-2S]-[ferredoxin] + NADP(+) + H(+) = 2 oxidized [2Fe-2S]-[ferredoxin] + NADPH. Its pathway is energy metabolism; photosynthesis. Its function is as follows. May play a key role in regulating the relative amounts of cyclic and non-cyclic electron flow to meet the demands of the plant for ATP and reducing power. The polypeptide is Ferredoxin--NADP reductase, chloroplastic (PETH) (Chlamydomonas reinhardtii (Chlamydomonas smithii)).